We begin with the raw amino-acid sequence, 379 residues long: Deoxyhypusine synthase (379 aa).

NAD(+)-binding positions include 108-112 (SNLIS), 134-136 (TAG), Glu140, and Asp257. 139–140 (EE) lines the spermidine pocket. Residue Asp262 coordinates spermidine. Gly304 serves as a coordination point for NAD(+). His309 provides a ligand contact to spermidine. Residue 329 to 330 (TG) participates in NAD(+) binding. Spermidine contacts are provided by residues 335-337 (GSD) and 344-350 (EAVSWGK). The active-site Nucleophile is the Lys350. An NAD(+)-binding site is contributed by 363 to 364 (DA).

It belongs to the deoxyhypusine synthase family. NAD(+) serves as cofactor.

It carries out the reaction [eIF5A protein]-L-lysine + spermidine = [eIF5A protein]-deoxyhypusine + propane-1,3-diamine. Its pathway is protein modification; eIF5A hypusination. Functionally, catalyzes the NAD-dependent oxidative cleavage of spermidine and the subsequent transfer of the butylamine moiety of spermidine to the epsilon-amino group of a specific lysine residue of the eIF-5A precursor protein to form the intermediate deoxyhypusine residue. The protein is Deoxyhypusine synthase (DYS1) of Kluyveromyces lactis (strain ATCC 8585 / CBS 2359 / DSM 70799 / NBRC 1267 / NRRL Y-1140 / WM37) (Yeast).